A 461-amino-acid chain; its full sequence is Gram-negative bacteria-binding protein 2 (461 aa).

Positions 1–20 are cleaved as a signal peptide; sequence MRWEFLPCLLLLISNNKIFG. Positions 21–115 constitute a CBM39 domain; the sequence is FKVPSINFEM…TRVIINTRLL (95 aa). N-linked (GlcNAc...) asparagine glycans are attached at residues Asn-71, Asn-170, Asn-177, and Asn-364. One can recognise a GH16 domain in the interval 179–461; the sequence is TTWKHDIRQR…VIDYVRVYAE (283 aa).

It belongs to the insect beta-1,3-glucan binding protein family.

The protein resides in the secreted. Its function is as follows. Involved in the recognition of invading microorganisms. Binds specifically to beta-1,3-glucan and activates the phenoloxidase cascade. This is Gram-negative bacteria-binding protein 2 from Drosophila melanogaster (Fruit fly).